Reading from the N-terminus, the 263-residue chain is Small ribosomal subunit protein uS2 (263 aa).

Position 2 is an N-acetylserine (Ser-2). Over residues 211–242 the composition is skewed to acidic residues; sequence EQTAEEEAEAAEGAEFEVEEEEVEQEWQEPAE. A disordered region spans residues 211 to 263; the sequence is EQTAEEEAEAAEGAEFEVEEEEVEQEWQEPAEADWNASAPPADWNDAANAEAF. Low complexity predominate over residues 246 to 263; the sequence is NASAPPADWNDAANAEAF.

This sequence belongs to the universal ribosomal protein uS2 family. Component of the small ribosomal subunit. Mature ribosomes consist of a small (40S) and a large (60S) subunit. The 40S subunit contains about 33 different proteins and 1 molecule of RNA (18S). The 60S subunit contains about 49 different proteins and 3 molecules of RNA (25S, 5.8S and 5S). Interacts with RPS21.

The protein resides in the cytoplasm. In terms of biological role, required for the assembly and/or stability of the 40S ribosomal subunit. Required for the processing of the 20S rRNA-precursor to mature 18S rRNA in a late step of the maturation of 40S ribosomal subunits. This chain is Small ribosomal subunit protein uS2, found in Komagataella phaffii (strain GS115 / ATCC 20864) (Yeast).